The primary structure comprises 158 residues: Transcription elongation factor GreA (158 aa).

Belongs to the GreA/GreB family.

Its function is as follows. Necessary for efficient RNA polymerase transcription elongation past template-encoded arresting sites. The arresting sites in DNA have the property of trapping a certain fraction of elongating RNA polymerases that pass through, resulting in locked ternary complexes. Cleavage of the nascent transcript by cleavage factors such as GreA or GreB allows the resumption of elongation from the new 3'terminus. GreA releases sequences of 2 to 3 nucleotides. The protein is Transcription elongation factor GreA of Macrococcus caseolyticus (strain JCSC5402) (Macrococcoides caseolyticum).